Consider the following 160-residue polypeptide: Large ribosomal subunit protein eL21 (160 aa).

The protein belongs to the eukaryotic ribosomal protein eL21 family. In terms of assembly, component of the large ribosomal subunit. Mature ribosomes consist of a small (40S) and a large (60S) subunit. The 40S subunit contains about 32 different proteins and 1 molecule of RNA (18S). The 60S subunit contains 45 different proteins and 3 molecules of RNA (25S, 5.8S and 5S).

The protein localises to the cytoplasm. Its function is as follows. Component of the ribosome, a large ribonucleoprotein complex responsible for the synthesis of proteins in the cell. The small ribosomal subunit (SSU) binds messenger RNAs (mRNAs) and translates the encoded message by selecting cognate aminoacyl-transfer RNA (tRNA) molecules. The large subunit (LSU) contains the ribosomal catalytic site termed the peptidyl transferase center (PTC), which catalyzes the formation of peptide bonds, thereby polymerizing the amino acids delivered by tRNAs into a polypeptide chain. The nascent polypeptides leave the ribosome through a tunnel in the LSU and interact with protein factors that function in enzymatic processing, targeting, and the membrane insertion of nascent chains at the exit of the ribosomal tunnel. The protein is Large ribosomal subunit protein eL21 of Candida albicans (strain SC5314 / ATCC MYA-2876) (Yeast).